The primary structure comprises 250 residues: Probable aquaporin TIP-type (250 aa).

Helical transmembrane passes span A20–Y42 and G55–V77. An NPA 1 motif is present at residues N83–A85. 3 helical membrane-spanning segments follow: residues T97–L119, I140–A162, and I172–G194. The NPA 2 motif lies at N197–A199. Residues W215–I237 form a helical membrane-spanning segment.

This sequence belongs to the MIP/aquaporin (TC 1.A.8) family. TIP (TC 1.A.8.10) subfamily. In terms of tissue distribution, expressed in mature seeds and dark-grown seedlings.

It localises to the vacuole membrane. In terms of biological role, channel protein in tonoplast. These proteins may allow the diffusion of amino acids and/or peptides from the vacuolar compartment to the cytoplasm. The polypeptide is Probable aquaporin TIP-type (DIP) (Antirrhinum majus (Garden snapdragon)).